Consider the following 252-residue polypeptide: Chitooligosaccharide deacetylase (252 aa).

Residues H61 and H125 each coordinate Mg(2+).

Belongs to the YdjC deacetylase family. ChbG subfamily. In terms of assembly, homodimer. The cofactor is Mg(2+).

It localises to the cytoplasm. It catalyses the reaction N,N'-diacetylchitobiose + H2O = N-acetyl-beta-D-glucosaminyl-(1-&gt;4)-D-glucosamine + acetate. The catalysed reaction is diacetylchitobiose-6'-phosphate + H2O = N'-monoacetylchitobiose-6'-phosphate + acetate. It functions in the pathway glycan degradation; chitin degradation. In terms of biological role, involved in the degradation of chitin. ChbG is essential for growth on the acetylated chitooligosaccharides chitobiose and chitotriose but is dispensable for growth on cellobiose and chitosan dimer, the deacetylated form of chitobiose. Deacetylation of chitobiose-6-P and chitotriose-6-P is necessary for both the activation of the chb promoter by the regulatory protein ChbR and the hydrolysis of phosphorylated beta-glucosides by the phospho-beta-glucosidase ChbF. Catalyzes the removal of only one acetyl group from chitobiose-6-P to yield monoacetylchitobiose-6-P, the inducer of ChbR and the substrate of ChbF. The protein is Chitooligosaccharide deacetylase of Salmonella paratyphi A (strain ATCC 9150 / SARB42).